We begin with the raw amino-acid sequence, 476 residues long: Bifunctional protein HldE (476 aa).

The ribokinase stretch occupies residues 1–318 (MAQYSAEFKQ…ENAIHARPET (318 aa)). Position 195–198 (195–198 (NMSE)) interacts with ATP. Aspartate 264 is a catalytic residue. A cytidylyltransferase region spans residues 344-476 (MTNGCFDILH…VIEKIKLLKD (133 aa)).

In the N-terminal section; belongs to the carbohydrate kinase PfkB family. This sequence in the C-terminal section; belongs to the cytidylyltransferase family. In terms of assembly, homodimer.

It catalyses the reaction D-glycero-beta-D-manno-heptose 7-phosphate + ATP = D-glycero-beta-D-manno-heptose 1,7-bisphosphate + ADP + H(+). The enzyme catalyses D-glycero-beta-D-manno-heptose 1-phosphate + ATP + H(+) = ADP-D-glycero-beta-D-manno-heptose + diphosphate. It functions in the pathway nucleotide-sugar biosynthesis; ADP-L-glycero-beta-D-manno-heptose biosynthesis; ADP-L-glycero-beta-D-manno-heptose from D-glycero-beta-D-manno-heptose 7-phosphate: step 1/4. It participates in nucleotide-sugar biosynthesis; ADP-L-glycero-beta-D-manno-heptose biosynthesis; ADP-L-glycero-beta-D-manno-heptose from D-glycero-beta-D-manno-heptose 7-phosphate: step 3/4. Its pathway is bacterial outer membrane biogenesis; LOS core biosynthesis. Functionally, catalyzes the phosphorylation of D-glycero-D-manno-heptose 7-phosphate at the C-1 position to selectively form D-glycero-beta-D-manno-heptose-1,7-bisphosphate. In terms of biological role, catalyzes the ADP transfer from ATP to D-glycero-beta-D-manno-heptose 1-phosphate, yielding ADP-D-glycero-beta-D-manno-heptose. The sequence is that of Bifunctional protein HldE from Haemophilus influenzae (strain ATCC 51907 / DSM 11121 / KW20 / Rd).